The following is a 119-amino-acid chain: uncharacterized protein (119 aa).

This is an uncharacterized protein from Escherichia coli (strain K12).